Here is a 530-residue protein sequence, read N- to C-terminus: Ubiquitin carboxyl-terminal hydrolase 17-like protein 1 (530 aa).

The region spanning 80-375 is the USP domain; that stretch reads AGLQNMGNTC…QAYVLFYIQK (296 aa). Cys89 serves as the catalytic Nucleophile. The active-site Proton acceptor is the His334. Basic and acidic residues-rich tracts occupy residues 382–392 and 398–411; these read SESVSRGREPR and DTDRRAKQGELKRD. Residues 382-411 form a disordered region; the sequence is SESVSRGREPRALGAEDTDRRAKQGELKRD.

Belongs to the peptidase C19 family. USP17 subfamily.

It is found in the nucleus. Its subcellular location is the endoplasmic reticulum. It carries out the reaction Thiol-dependent hydrolysis of ester, thioester, amide, peptide and isopeptide bonds formed by the C-terminal Gly of ubiquitin (a 76-residue protein attached to proteins as an intracellular targeting signal).. In terms of biological role, deubiquitinating enzyme that removes conjugated ubiquitin from specific proteins to regulate different cellular processes that may include cell proliferation, progression through the cell cycle, apoptosis, cell migration, and the cellular response to viral infection. The protein is Ubiquitin carboxyl-terminal hydrolase 17-like protein 1 (USP17L1) of Homo sapiens (Human).